A 559-amino-acid polypeptide reads, in one-letter code: Coiled-coil domain-containing protein 63 (559 aa).

Coiled-coil stretches lie at residues 14–70 (ELSE…QAET), 185–261 (EKAA…KLKS), and 364–414 (QQQS…VEKL).

Functionally, plays a role in spermiogenesis. Involved in the elongation of flagella and the formation of sperm heads. In Rattus norvegicus (Rat), this protein is Coiled-coil domain-containing protein 63.